Consider the following 320-residue polypeptide: Histidine decarboxylase proenzyme (320 aa).

Residues 2–11 (NKNLEANRNR) constitute a propeptide that is removed on maturation. At Ser98 the chain carries Pyruvic acid (Ser). The active-site Proton donor is Glu215.

As to quaternary structure, the proenzyme is a hexamer of identical pi chains; each pi chain monomer is cleaved to form a small (or beta) chain and a large (or alpha) chain by non-hydrolytic self-catalysis. Pyruvate serves as cofactor.

It catalyses the reaction L-histidine + H(+) = histamine + CO2. This chain is Histidine decarboxylase proenzyme (hdc), found in Clostridium perfringens (strain ATCC 13124 / DSM 756 / JCM 1290 / NCIMB 6125 / NCTC 8237 / Type A).